The primary structure comprises 270 residues: Formamidopyrimidine-DNA glycosylase (270 aa).

The active-site Schiff-base intermediate with DNA is Pro2. Glu3 (proton donor) is an active-site residue. Lys58 functions as the Proton donor; for beta-elimination activity in the catalytic mechanism. DNA-binding residues include His91, Arg109, and Arg151. An FPG-type zinc finger spans residues 236 to 270; that stretch reads LVYGRGGEACKTCQKPLKEIRMNDRTTVYCVTCQQ. Arg260 acts as the Proton donor; for delta-elimination activity in catalysis.

The protein belongs to the FPG family. As to quaternary structure, monomer. It depends on Zn(2+) as a cofactor.

The enzyme catalyses Hydrolysis of DNA containing ring-opened 7-methylguanine residues, releasing 2,6-diamino-4-hydroxy-5-(N-methyl)formamidopyrimidine.. It carries out the reaction 2'-deoxyribonucleotide-(2'-deoxyribose 5'-phosphate)-2'-deoxyribonucleotide-DNA = a 3'-end 2'-deoxyribonucleotide-(2,3-dehydro-2,3-deoxyribose 5'-phosphate)-DNA + a 5'-end 5'-phospho-2'-deoxyribonucleoside-DNA + H(+). Its function is as follows. Involved in base excision repair of DNA damaged by oxidation or by mutagenic agents. Acts as a DNA glycosylase that recognizes and removes damaged bases. Has a preference for oxidized purines, such as 7,8-dihydro-8-oxoguanine (8-oxoG). Has AP (apurinic/apyrimidinic) lyase activity and introduces nicks in the DNA strand. Cleaves the DNA backbone by beta-delta elimination to generate a single-strand break at the site of the removed base with both 3'- and 5'-phosphates. This Cellvibrio japonicus (strain Ueda107) (Pseudomonas fluorescens subsp. cellulosa) protein is Formamidopyrimidine-DNA glycosylase.